The following is a 495-amino-acid chain: UDP-N-acetylmuramoyl-L-alanyl-D-glutamate--2,6-diaminopimelate ligase (495 aa).

Residues L27, S29, and 44-46 (HQA) each bind UDP-N-acetyl-alpha-D-muramoyl-L-alanyl-D-glutamate. ATP is bound at residue 116–122 (GTNGKTT). UDP-N-acetyl-alpha-D-muramoyl-L-alanyl-D-glutamate-binding positions include N157, 158–159 (TT), S185, Q191, and R193. K225 is subject to N6-carboxylysine. Meso-2,6-diaminopimelate contacts are provided by residues R390, 414 to 417 (DNPR), G465, and E469. The Meso-diaminopimelate recognition motif signature appears at 414-417 (DNPR).

Belongs to the MurCDEF family. MurE subfamily. It depends on Mg(2+) as a cofactor. Carboxylation is probably crucial for Mg(2+) binding and, consequently, for the gamma-phosphate positioning of ATP.

It is found in the cytoplasm. The enzyme catalyses UDP-N-acetyl-alpha-D-muramoyl-L-alanyl-D-glutamate + meso-2,6-diaminopimelate + ATP = UDP-N-acetyl-alpha-D-muramoyl-L-alanyl-gamma-D-glutamyl-meso-2,6-diaminopimelate + ADP + phosphate + H(+). The protein operates within cell wall biogenesis; peptidoglycan biosynthesis. Its function is as follows. Catalyzes the addition of meso-diaminopimelic acid to the nucleotide precursor UDP-N-acetylmuramoyl-L-alanyl-D-glutamate (UMAG) in the biosynthesis of bacterial cell-wall peptidoglycan. This chain is UDP-N-acetylmuramoyl-L-alanyl-D-glutamate--2,6-diaminopimelate ligase, found in Salmonella choleraesuis (strain SC-B67).